The following is a 191-amino-acid chain: Molybdenum cofactor guanylyltransferase (191 aa).

Residues 13–15, lysine 26, aspartate 72, and aspartate 102 each bind GTP; that span reads LAG. Mg(2+) is bound at residue aspartate 102.

Belongs to the MobA family. Monomer. Mg(2+) is required as a cofactor.

Its subcellular location is the cytoplasm. It carries out the reaction Mo-molybdopterin + GTP + H(+) = Mo-molybdopterin guanine dinucleotide + diphosphate. Its function is as follows. Transfers a GMP moiety from GTP to Mo-molybdopterin (Mo-MPT) cofactor (Moco or molybdenum cofactor) to form Mo-molybdopterin guanine dinucleotide (Mo-MGD) cofactor. In Pseudomonas putida (strain ATCC 47054 / DSM 6125 / CFBP 8728 / NCIMB 11950 / KT2440), this protein is Molybdenum cofactor guanylyltransferase.